We begin with the raw amino-acid sequence, 131 residues long: Aspartate 1-decarboxylase (131 aa).

Ser-25 acts as the Schiff-base intermediate with substrate; via pyruvic acid in catalysis. Pyruvic acid (Ser) is present on Ser-25. Thr-57 is a substrate binding site. Tyr-58 serves as the catalytic Proton donor. 73–75 (GAA) lines the substrate pocket.

Belongs to the PanD family. In terms of assembly, heterooctamer of four alpha and four beta subunits. Pyruvate serves as cofactor. In terms of processing, is synthesized initially as an inactive proenzyme, which is activated by self-cleavage at a specific serine bond to produce a beta-subunit with a hydroxyl group at its C-terminus and an alpha-subunit with a pyruvoyl group at its N-terminus.

It is found in the cytoplasm. It carries out the reaction L-aspartate + H(+) = beta-alanine + CO2. The protein operates within cofactor biosynthesis; (R)-pantothenate biosynthesis; beta-alanine from L-aspartate: step 1/1. In terms of biological role, catalyzes the pyruvoyl-dependent decarboxylation of aspartate to produce beta-alanine. The polypeptide is Aspartate 1-decarboxylase (Anaeromyxobacter dehalogenans (strain 2CP-C)).